The chain runs to 250 residues: Small ribosomal subunit protein uS3 (250 aa).

The KH type-2 domain maps to 39-111; sequence IRTLIKNHYP…KIQINIFEVK (73 aa).

It belongs to the universal ribosomal protein uS3 family. As to quaternary structure, part of the 30S ribosomal subunit. Forms a tight complex with proteins S10 and S14.

Binds the lower part of the 30S subunit head. Binds mRNA in the 70S ribosome, positioning it for translation. This Elm witches'-broom phytoplasma protein is Small ribosomal subunit protein uS3.